A 338-amino-acid polypeptide reads, in one-letter code: uncharacterized protein (338 aa).

It belongs to the MG032/MG096/MG288 family.

This is an uncharacterized protein from Mycoplasma pneumoniae (strain ATCC 29342 / M129 / Subtype 1) (Mycoplasmoides pneumoniae).